The sequence spans 595 residues: (E)-beta-ocimene synthase, chloroplastic (595 aa).

The N-terminal 32 residues, 1–32, are a transit peptide targeting the chloroplast; the sequence is MSTISINLMSIIRNPLHSKSKRALINKHPSSS. Residues Asp-350 and Asp-354 each coordinate Mn(2+). Residues 350–354 carry the DDXXD motif motif; it reads DDVYD. Homodimerization stretches follow at residues 356 to 362 and 428 to 465; these read YGTLDEL and EEEW…LSIP. The Mn(2+) site is built by Asn-493 and Glu-501.

Belongs to the terpene synthase family. In terms of assembly, homodimer. Requires Mn(2+) as cofactor. Mg(2+) is required as a cofactor. Expressed in peltate glandular trichomes. Present in flowers, leaves and stems.

It localises to the plastid. The protein resides in the chloroplast. The enzyme catalyses (2E)-geranyl diphosphate = (E)-beta-ocimene + diphosphate. Its pathway is secondary metabolite biosynthesis; terpenoid biosynthesis. Its function is as follows. Involved in the biosynthesis of monoterpenes natural products. Monoterpene synthase that catalyzes mainly the formation of (E)-beta-ocimene and minor amounts of other monoterpenes (e.g. myrcene, (Z)-beta-ocimene, alpha- and gamma-terpinene) from geranyl diphosphate (GPP). The chain is (E)-beta-ocimene synthase, chloroplastic from Origanum vulgare (Wild marjoram).